The primary structure comprises 939 residues: cGMP-dependent 3',5'-cyclic phosphodiesterase (939 aa).

Gly-2 carries the N-myristoyl glycine lipid modification. Residues Cys-5 and Cys-11 are each lipidated (S-palmitoyl cysteine). The segment at 16-38 (YPAARPAEPRGQQVFLKPDEPPP) is disordered. Phosphoserine is present on Ser-116. The tract at residues 197–217 (PEAVQNTSVDASEDQKDEKGY) is disordered. 2 GAF domains span residues 236–373 (ATSL…HYTG) and 408–547 (DVSV…GISI). 3',5'-cyclic GMP contacts are provided by Ser-430, Asp-445, Ile-464, Tyr-487, and Thr-498. One can recognise a PDEase domain in the interval 577–901 (SDDEYTKLLH…EHWTKVSHKF (325 aa)). Catalysis depends on His-655, which acts as the Proton donor. Residues His-659, His-695, Asp-696, and Asp-807 each coordinate Zn(2+). Asp-696 contacts Mg(2+).

Belongs to the cyclic nucleotide phosphodiesterase family. PDE2 subfamily. In terms of assembly, homodimer. Zn(2+) is required as a cofactor. Requires Mg(2+) as cofactor. As to expression, expressed in brain and liver (at protein level).

It localises to the cytoplasm. The protein localises to the mitochondrion matrix. The protein resides in the mitochondrion inner membrane. Its subcellular location is the mitochondrion outer membrane. It is found in the cell membrane. The catalysed reaction is a nucleoside 3',5'-cyclic phosphate + H2O = a nucleoside 5'-phosphate + H(+). It carries out the reaction 3',5'-cyclic GMP + H2O = GMP + H(+). It catalyses the reaction 3',5'-cyclic AMP + H2O = AMP + H(+). The 3',5'-cyclic-AMP phosphodiesterase activity is stimulated by 3',5'-cyclic GMP. Specifically inhibited by Bay 60-7550. CGMP-activated cyclic nucleotide phosphodiesterase with a dual-specificity for the second messengers cAMP and cGMP, which are key regulators of many important physiological processes. Has a higher efficiency with cGMP compared to cAMP. Plays a role in cell growth and migration. Functionally, regulates mitochondrial cAMP levels and respiration. Involved in the regulation of mitochondria morphology/dynamics and apoptotic cell death via local modulation of cAMP/PKA signaling in the mitochondrion, including the monitoring of local cAMP levels at the outer mitochondrial membrane and of PKA-dependent phosphorylation of DNM1L. This is cGMP-dependent 3',5'-cyclic phosphodiesterase from Mus musculus (Mouse).